A 469-amino-acid chain; its full sequence is Ufm1-specific protease 2 (469 aa).

Methionine 1 bears the N-acetylmethionine mark. Active-site residues include cysteine 302, aspartate 426, and histidine 428.

The protein belongs to the peptidase C78 family. In terms of tissue distribution, expressed in brain.

Its subcellular location is the endoplasmic reticulum. It localises to the cytoplasm. The protein localises to the nucleus. Functionally, thiol-dependent isopeptidase that specifically cleaves UFM1, a ubiquitin-like modifier protein, from conjugated proteins, such as CD274/PD-L1, CYB5R3, DDRGK1, MRE11, RPL26/uL24, TRIP4 and RPL26/uL24. While it is also able to mediate the processing of UFM1 precursors, a prerequisite for conjugation reactions, UFSP2 mainly acts as a protein deUFMylase that mediates deconjugation of UFM1 from target proteins. Mediates deUFMylation of RPL26/uL24, a critical step to release the UFM1 ribosome E3 ligase (UREL) complex during the recycling of 60S ribosome subunits from the endoplasmic reticulum. Catalyzes deUFMylation of TRIP4, regulating intracellular nuclear receptors transactivation and thereby regulate cell proliferation and differentiation. The sequence is that of Ufm1-specific protease 2 from Homo sapiens (Human).